The following is a 357-amino-acid chain: Heat-inducible transcription repressor HrcA (357 aa).

The protein belongs to the HrcA family.

In terms of biological role, negative regulator of class I heat shock genes (grpE-dnaK-dnaJ and groELS operons). Prevents heat-shock induction of these operons. The chain is Heat-inducible transcription repressor HrcA from Ureaplasma parvum serovar 3 (strain ATCC 27815 / 27 / NCTC 11736).